Consider the following 1461-residue polypeptide: Pleiotropic drug resistance protein 2 (1461 aa).

In terms of domain architecture, ABC transporter 1 spans 172–445; it reads LGLIHLSPSK…FEYMGFRCPE (274 aa). 205-212 provides a ligand contact to ATP; the sequence is GPPGSGKT. The region spanning 523–736 is the ABC transmembrane type-2 1 domain; the sequence is ELFKSCFTRE…GQNAIAINEF (214 aa). A run of 6 helical transmembrane segments spans residues 541 to 561, 577 to 597, 622 to 642, 660 to 680, 685 to 705, and 771 to 791; these read FLYIFKTTQITIMATIALTVF, FWGALFFSLINVMFNGMQELA, LPIWVLKIPISLVESAIWIIL, LLAFIGVHQMALSLFRFIAAA, VVANTLGTFTLLMVFILGGFI, and ISIGALFGFSLLFNVLFIAAL. In terms of domain architecture, ABC transporter 2 spans 859–1111; it reads LAFNHVNYYV…KLVEYFETIP (253 aa). 904-911 provides a ligand contact to ATP; sequence GVSGAGKT. The region spanning 1184 to 1398 is the ABC transmembrane type-2 2 domain; the sequence is TQCKACFWKQ…TIYGIFASQV (215 aa). Transmembrane regions (helical) follow at residues 1203-1223, 1243-1263, 1291-1311, 1321-1341, 1348-1368, 1379-1399, and 1430-1450; these read YNAIRFFMTVIIGILFGVIFW, YAAVMFLGATNASAVQSVVAI, TIYVAIQTFVYSLLLFSMIGY, FYYFIFMCFTYFSMYGMMVVA, IAAIVMSFFLSFWNLFSGFLI, WYYWASPVAWTIYGIFASQVG, and FLLVVVFAHVGWVLLFFFVFA.

This sequence belongs to the ABC transporter superfamily. ABCG family. PDR (TC 3.A.1.205) subfamily.

It is found in the membrane. Functionally, may be a general defense protein. In Nicotiana plumbaginifolia (Leadwort-leaved tobacco), this protein is Pleiotropic drug resistance protein 2 (PDR2).